The sequence spans 35 residues: Conotoxin Cal6.1g (35 aa).

A propeptide spanning residues 1 to 8 is cleaved from the precursor; sequence GLSRPSKR. 3 cysteine pairs are disulfide-bonded: cysteine 9–cysteine 25, cysteine 16–cysteine 29, and cysteine 24–cysteine 34.

Belongs to the conotoxin O1 superfamily. As to expression, expressed by the venom duct.

It localises to the secreted. In terms of biological role, probable neurotoxin with unknown target. Possibly targets ion channels. This Californiconus californicus (California cone) protein is Conotoxin Cal6.1g.